Reading from the N-terminus, the 202-residue chain is Pyridoxal 5'-phosphate synthase subunit PdxT (202 aa).

Residue 49-51 (GES) coordinates L-glutamine. Residue cysteine 81 is the Nucleophile of the active site. Residues arginine 110 and 139-140 (IR) each bind L-glutamine. Residues histidine 182 and glutamate 184 each act as charge relay system in the active site.

The protein belongs to the glutaminase PdxT/SNO family. As to quaternary structure, in the presence of PdxS, forms a dodecamer of heterodimers. Only shows activity in the heterodimer.

The enzyme catalyses aldehydo-D-ribose 5-phosphate + D-glyceraldehyde 3-phosphate + L-glutamine = pyridoxal 5'-phosphate + L-glutamate + phosphate + 3 H2O + H(+). It carries out the reaction L-glutamine + H2O = L-glutamate + NH4(+). The protein operates within cofactor biosynthesis; pyridoxal 5'-phosphate biosynthesis. Its function is as follows. Catalyzes the hydrolysis of glutamine to glutamate and ammonia as part of the biosynthesis of pyridoxal 5'-phosphate. The resulting ammonia molecule is channeled to the active site of PdxS. The chain is Pyridoxal 5'-phosphate synthase subunit PdxT from Rhodococcus opacus (strain B4).